The primary structure comprises 329 residues: MEPRVITYTKNVFLPLTSVCRNRCGYCSFRTPVQEGCVMLPEEVEAVLAQGQAAGCTEALFTFGEHPEEEEGFRAYLEKTGYDTILDYCEAMCRLALRYGILPHTNAGILTYDEMKRLRPTNASMGLMLETTARIPAHQGSKGKEPEVRLAMMEDAGRLKIPFTTGLLLGIGETAAGREDSLIAIRDIHKKYGHIQEIILQNFCPKNNTPMAAFRVPDTQEICNTILMARRILPEEISIQVAPNLIDASRLIGCGVSDLGGISPVTIDYVNPEHPWPAFNDLKKIVGDATLQERLCIYPRFIRPGWYDPGLQPLINRLNQRISRGSSQP.

A Radical SAM core domain is found at 6–244 (ITYTKNVFLP…EEISIQVAPN (239 aa)). The [4Fe-4S] cluster site is built by Cys20, Cys24, and Cys27.

The protein belongs to the radical SAM superfamily. CofG family. As to quaternary structure, consists of two subunits, CofG and CofH. The cofactor is [4Fe-4S] cluster.

It carries out the reaction 5-amino-5-(4-hydroxybenzyl)-6-(D-ribitylimino)-5,6-dihydrouracil + S-adenosyl-L-methionine = 7,8-didemethyl-8-hydroxy-5-deazariboflavin + 5'-deoxyadenosine + L-methionine + NH4(+) + H(+). It participates in cofactor biosynthesis; coenzyme F0 biosynthesis. In terms of biological role, catalyzes the radical-mediated synthesis of 7,8-didemethyl-8-hydroxy-5-deazariboflavin from 5-amino-5-(4-hydroxybenzyl)-6-(D-ribitylimino)-5,6-dihydrouracil. This is 7,8-didemethyl-8-hydroxy-5-deazariboflavin synthase from Methanoregula boonei (strain DSM 21154 / JCM 14090 / 6A8).